The sequence spans 156 residues: UPF0587 protein (156 aa).

Residues Cys-32, Cys-35, Cys-64, and Cys-67 each coordinate Zn(2+).

The protein belongs to the UPF0587 family.

In Dictyostelium discoideum (Social amoeba), this protein is UPF0587 protein.